A 151-amino-acid chain; its full sequence is uncharacterized protein (151 aa).

The next 4 helical transmembrane spans lie at 8 to 28 (GIGSGVSLLILRFFLAWEFFE), 60 to 80 (WHVAMGSELIFPFLLIFGVLT), 82 to 102 (FSALSLTILISVAWYSIHADS), and 113 to 133 (LPLIYVVTLLILITQGAGKLS).

This sequence belongs to the DoxX family.

It is found in the cell membrane. This is an uncharacterized protein from Haemophilus influenzae (strain ATCC 51907 / DSM 11121 / KW20 / Rd).